The following is a 142-amino-acid chain: Cell wall-binding protein YqgA (142 aa).

Positions 1-28 (MKQGKFSVFLILLLMLTLVVAPKEKAEA) are cleaved as a signal peptide.

As to quaternary structure, found in a complex with F(1)F(0) ATP synthase and SpoIIIJ and YqjG.

It is found in the secreted. It localises to the cell wall. The protein is Cell wall-binding protein YqgA (yqgA) of Bacillus subtilis (strain 168).